We begin with the raw amino-acid sequence, 485 residues long: Aspartyl/glutamyl-tRNA(Asn/Gln) amidotransferase subunit B (485 aa).

Belongs to the GatB/GatE family. GatB subfamily. Heterotrimer of A, B and C subunits.

The catalysed reaction is L-glutamyl-tRNA(Gln) + L-glutamine + ATP + H2O = L-glutaminyl-tRNA(Gln) + L-glutamate + ADP + phosphate + H(+). The enzyme catalyses L-aspartyl-tRNA(Asn) + L-glutamine + ATP + H2O = L-asparaginyl-tRNA(Asn) + L-glutamate + ADP + phosphate + 2 H(+). Its function is as follows. Allows the formation of correctly charged Asn-tRNA(Asn) or Gln-tRNA(Gln) through the transamidation of misacylated Asp-tRNA(Asn) or Glu-tRNA(Gln) in organisms which lack either or both of asparaginyl-tRNA or glutaminyl-tRNA synthetases. The reaction takes place in the presence of glutamine and ATP through an activated phospho-Asp-tRNA(Asn) or phospho-Glu-tRNA(Gln). This Borrelia recurrentis (strain A1) protein is Aspartyl/glutamyl-tRNA(Asn/Gln) amidotransferase subunit B.